Reading from the N-terminus, the 530-residue chain is Glucose-6-phosphate isomerase (530 aa).

Glu-356 functions as the Proton donor in the catalytic mechanism. Residues His-387 and Lys-502 contribute to the active site.

It belongs to the GPI family.

The protein resides in the cytoplasm. The enzyme catalyses alpha-D-glucose 6-phosphate = beta-D-fructose 6-phosphate. It participates in carbohydrate biosynthesis; gluconeogenesis. The protein operates within carbohydrate degradation; glycolysis; D-glyceraldehyde 3-phosphate and glycerone phosphate from D-glucose: step 2/4. Catalyzes the reversible isomerization of glucose-6-phosphate to fructose-6-phosphate. The chain is Glucose-6-phosphate isomerase from Borreliella afzelii (strain PKo) (Borrelia afzelii).